We begin with the raw amino-acid sequence, 561 residues long: MAVAFRGGRGGVGSGQSTGLRSFFSYRIFISALFSFLFLATFSVVLNSSRHQPHQDHTLPSMGNAYMQRTFLALQSDPLKTRLDLIHKQAIDHLTLVNAYAAYARKLKLDASKQLKLFEDLAINFSDLQSKPGLKSAVSDNGNALEEDSFRQLEKEVKDKVKTARMMIVESKESYDTQLKIQKLKDTIFAVQEQLTKAKKNGAVASLISAKSVPKSLHCLAMRLVGERISNPEKYKDAPPDPAAEDPTLYHYAIFSDNVIAVSVVVRSVVMNAEEPWKHVFHVVTDRMNLAAMKVWFKMRPLDRGAHVEIKSVEDFKFLNSSYAPVLRQLESAKLQKFYFENQAENATKDSHNLKFKNPKYLSMLNHLRFYLPEMYPKLNKILFLDDDVVVQKDVTGLWKINLDGKVNGAVETCFGSFHRYGQYLNFSHPLIKENFNPSACAWAFGMNIFDLNAWRREKCTDQYHYWQNLNEDRTLWKLGTLPPGLITFYSKTKSLDKSWHVLGLGYNPGVSMDEIRNAGVIHYNGNMKPWLDIAMNQYKSLWTKYVDNEMEFVQMCNFGL.

At 1 to 27 (MAVAFRGGRGGVGSGQSTGLRSFFSYR) the chain is on the cytoplasmic side. The chain crosses the membrane as a helical; Signal-anchor for type II membrane protein span at residues 28–48 (IFISALFSFLFLATFSVVLNS). The Lumenal portion of the chain corresponds to 49-561 (SRHQPHQDHT…EFVQMCNFGL (513 aa)). N-linked (GlcNAc...) asparagine glycans are attached at residues Asn124, Asn320, Asn346, and Asn426.

The protein belongs to the glycosyltransferase 8 family. In terms of tissue distribution, expressed in roots, inflorescences, siliques, leaves and stems.

It is found in the golgi apparatus membrane. It functions in the pathway glycan metabolism; pectin biosynthesis. May be involved in pectin synthesis. This Arabidopsis thaliana (Mouse-ear cress) protein is Probable galacturonosyltransferase 9 (GAUT9).